The chain runs to 276 residues: Diaminopimelate epimerase (276 aa).

Substrate is bound by residues N13, Q46, and N66. The active-site Proton donor is C75. Residues 76-77 (GN), N159, N192, and 210-211 (ER) contribute to the substrate site. The active-site Proton acceptor is the C219. Position 220-221 (220-221 (GT)) interacts with substrate.

Belongs to the diaminopimelate epimerase family. As to quaternary structure, homodimer.

The protein localises to the cytoplasm. The catalysed reaction is (2S,6S)-2,6-diaminopimelate = meso-2,6-diaminopimelate. The protein operates within amino-acid biosynthesis; L-lysine biosynthesis via DAP pathway; DL-2,6-diaminopimelate from LL-2,6-diaminopimelate: step 1/1. In terms of biological role, catalyzes the stereoinversion of LL-2,6-diaminopimelate (L,L-DAP) to meso-diaminopimelate (meso-DAP), a precursor of L-lysine and an essential component of the bacterial peptidoglycan. This chain is Diaminopimelate epimerase, found in Pseudomonas fluorescens (strain Pf0-1).